A 463-amino-acid chain; its full sequence is Mitochondrial distribution and morphology protein 10 (463 aa).

Belongs to the MDM10 family. In terms of assembly, component of the ER-mitochondria encounter structure (ERMES) or MDM complex, composed of MMM1, MDM10, MDM12 and MDM34. Associates with the mitochondrial outer membrane sorting assembly machinery SAM(core) complex.

The protein localises to the mitochondrion outer membrane. In terms of biological role, component of the ERMES/MDM complex, which serves as a molecular tether to connect the endoplasmic reticulum and mitochondria. Components of this complex are involved in the control of mitochondrial shape and protein biogenesis and may function in phospholipid exchange. MDM10 is involved in the late assembly steps of the general translocase of the mitochondrial outer membrane (TOM complex). Functions in the TOM40-specific route of the assembly of outer membrane beta-barrel proteins, including the association of TOM40 with the receptor TOM22 and small TOM proteins. Can associate with the SAM(core) complex as well as the MDM12-MMM1 complex, both involved in late steps of the major beta-barrel assembly pathway, that is responsible for biogenesis of all outer membrane beta-barrel proteins. May act as a switch that shuttles between both complexes and channels precursor proteins into the TOM40-specific pathway. Plays a role in mitochondrial morphology and in the inheritance of mitochondria. In Candida dubliniensis (strain CD36 / ATCC MYA-646 / CBS 7987 / NCPF 3949 / NRRL Y-17841) (Yeast), this protein is Mitochondrial distribution and morphology protein 10.